We begin with the raw amino-acid sequence, 228 residues long: uncharacterized protein (228 aa).

Transmembrane regions (helical) follow at residues 14–34, 53–73, 108–128, 148–168, 178–198, and 200–220; these read GWYI…MWLI, FLII…VLIV, GLTF…FFWL, AVKM…PIFF, TIIS…GFSI, and SVVY…YMAI.

It is found in the cell membrane. This is an uncharacterized protein from Bacillus subtilis (strain 168).